A 182-amino-acid chain; its full sequence is Large ribosomal subunit protein uL5 (182 aa).

It belongs to the universal ribosomal protein uL5 family. As to quaternary structure, part of the 50S ribosomal subunit; part of the 5S rRNA/L5/L18/L25 subcomplex. Contacts the 5S rRNA and the P site tRNA. Forms a bridge to the 30S subunit in the 70S ribosome.

Its function is as follows. This is one of the proteins that bind and probably mediate the attachment of the 5S RNA into the large ribosomal subunit, where it forms part of the central protuberance. In the 70S ribosome it contacts protein S13 of the 30S subunit (bridge B1b), connecting the 2 subunits; this bridge is implicated in subunit movement. Contacts the P site tRNA; the 5S rRNA and some of its associated proteins might help stabilize positioning of ribosome-bound tRNAs. This chain is Large ribosomal subunit protein uL5, found in Nostoc punctiforme (strain ATCC 29133 / PCC 73102).